The sequence spans 328 residues: MGAAARLSAPRALVLWAALGAAAHIGPAPDPEDWWSYKDNLQGNFVPGPPFWGLVNAAWSLCVVGKRQSPVDVELKRVLYDPFLPPLRLSTGGEKLRGTLYNTGRHVSFLPAPRPVVNVSGGPLLYSHRLSELRLLFGARDGAGSEHQINHQGFSAEVQLIHFNQELYGNLSAATRGPNGLAILSLFVNVAGSSNPFLSRLLNRDTITRISYKNDAYFLQDLSLELLFPESFGFITYQGSLSTPPCSETVTWILIDRALNITSLQMHSLRLLSQNPPSQIFQSLSGNGRPLQPLAHRALRGNRDPRHPERRCRGPNYRLHVDGAPHGR.

Positions 1–22 (MGAAARLSAPRALVLWAALGAA) are cleaved as a signal peptide. The Alpha-carbonic anhydrase domain occupies 33 to 303 (DWWSYKDNLQ…LAHRALRGNR (271 aa)). Residues asparagine 118, asparagine 170, and asparagine 260 are each glycosylated (N-linked (GlcNAc...) asparagine). Positions 300–328 (RGNRDPRHPERRCRGPNYRLHVDGAPHGR) are disordered. Residues 319-328 (LHVDGAPHGR) are compositionally biased toward basic and acidic residues.

The protein belongs to the alpha-carbonic anhydrase family.

The protein localises to the secreted. Does not have a catalytic activity. The polypeptide is Carbonic anhydrase-related protein 11 (CA11) (Bos taurus (Bovine)).